The primary structure comprises 66 residues: Conotoxin Ca5.2 (66 aa).

An N-terminal signal peptide occupies residues 1 to 22 (MRCVPVFLILLGLIASAPSVDA). A propeptide spanning residues 23–48 (RPQTKDDALASFHDSAKRHLQRLVNA) is cleaved from the precursor. Position 62 is a phenylalanine amide (Phe-62).

Belongs to the conotoxin T superfamily. Contains 2 disulfide bonds that can be either 'C1-C3, C2-C4' or 'C1-C4, C2-C3', since these disulfide connectivities have been observed for conotoxins with cysteine framework V (for examples, see AC P0DQQ7 and AC P81755). In terms of tissue distribution, expressed by the venom duct.

Its subcellular location is the secreted. The chain is Conotoxin Ca5.2 from Conus caracteristicus (Characteristic cone).